A 375-amino-acid chain; its full sequence is Chaperone protein DnaJ (375 aa).

The region spanning Asp6–Gly71 is the J domain. The segment at Gly132–Gln214 adopts a CR-type zinc-finger fold. Zn(2+) is bound by residues Cys145, Cys148, Cys162, Cys165, Cys188, Cys191, Cys202, and Cys205. 4 CXXCXGXG motif repeats span residues Cys145–Gly152, Cys162–Gly169, Cys188–Gly195, and Cys202–Gly209. Positions Pro222–Gly243 are disordered.

It belongs to the DnaJ family. In terms of assembly, homodimer. Zn(2+) is required as a cofactor.

The protein resides in the cytoplasm. Participates actively in the response to hyperosmotic and heat shock by preventing the aggregation of stress-denatured proteins and by disaggregating proteins, also in an autonomous, DnaK-independent fashion. Unfolded proteins bind initially to DnaJ; upon interaction with the DnaJ-bound protein, DnaK hydrolyzes its bound ATP, resulting in the formation of a stable complex. GrpE releases ADP from DnaK; ATP binding to DnaK triggers the release of the substrate protein, thus completing the reaction cycle. Several rounds of ATP-dependent interactions between DnaJ, DnaK and GrpE are required for fully efficient folding. Also involved, together with DnaK and GrpE, in the DNA replication of plasmids through activation of initiation proteins. This is Chaperone protein DnaJ from Halothermothrix orenii (strain H 168 / OCM 544 / DSM 9562).